The primary structure comprises 1010 residues: 2-oxoglutarate dehydrogenase-like, mitochondrial (1010 aa).

Residues 1 to 107 constitute a mitochondrion transit peptide; sequence MSQLRLLLFR…RASVSSCTKT (107 aa). Residues 28-47 are disordered; sequence GGRRRSSGPPTTIPRSRGGV. Ca(2+) contacts are provided by His130, Asp143, and Asp145. Residues Arg299, Asp398, Asn431, Ile433, and Gln663 each contribute to the thiamine diphosphate site. Residues Asp398, Asn431, and Ile433 each contribute to the Mg(2+) site.

It belongs to the alpha-ketoglutarate dehydrogenase family. In terms of assembly, the OGDHC complex comprises multiple copies of three catalytic enzyme components, the 2-oxoglutarate dehydrogenase (OGDH/E1), the dihydrolipoamide dehydrogenase (DLST/E2) and the dihydrolipoamide dehydrogenase (DLD/E3). OGDHL/E1-like isoenzyme may replace OGDH in the OGDHC complex in the brain. The presence of either ODGH/E1 or ODGHL/E1-like isoenzyme in the complex may depend on its tissular distribution. Thiamine diphosphate serves as cofactor. Mg(2+) is required as a cofactor. As to expression, the OGDHL-containing OGDHC complex is present in the brain, but not in the heart.

It is found in the mitochondrion matrix. It carries out the reaction N(6)-[(R)-lipoyl]-L-lysyl-[protein] + 2-oxoglutarate + H(+) = N(6)-[(R)-S(8)-succinyldihydrolipoyl]-L-lysyl-[protein] + CO2. In terms of biological role, 2-oxoglutarate dehydrogenase (E1-like) component of the 2-oxoglutarate dehydrogenase multienzyme complex (OGDHC) which mediates the decarboxylation of alpha-ketoglutarate in the tricarboxylic acid cycle. The OGDHC complex catalyzes the overall conversion of 2-oxoglutarate to succinyl-CoA and CO(2) while reducing NAD(+) to NADH. The OGDHC complex is mainly active in the mitochondrion. Involved in the inhibition of cell proliferation and in apoptosis. The sequence is that of 2-oxoglutarate dehydrogenase-like, mitochondrial from Rattus norvegicus (Rat).